Here is a 234-residue protein sequence, read N- to C-terminus: Proteasome subunit alpha type-6 (234 aa).

Serine 14 is subject to Phosphoserine. Lysine 191 is covalently cross-linked (Glycyl lysine isopeptide (Lys-Gly) (interchain with G-Cter in ubiquitin)).

The protein belongs to the peptidase T1A family. In terms of assembly, the 26S proteasome consists of a 20S proteasome core and two 19S regulatory subunits. The 20S proteasome core is composed of 28 subunits that are arranged in four stacked rings, resulting in a barrel-shaped structure. The two end rings are each formed by seven alpha subunits, and the two central rings are each formed by seven beta subunits. The catalytic chamber with the active sites is on the inside of the barrel.

Its subcellular location is the cytoplasm. It is found in the nucleus. Its function is as follows. The proteasome degrades poly-ubiquitinated proteins in the cytoplasm and in the nucleus. It is essential for the regulated turnover of proteins and for the removal of misfolded proteins. The proteasome is a multicatalytic proteinase complex that is characterized by its ability to cleave peptides with Arg, Phe, Tyr, Leu, and Glu adjacent to the leaving group at neutral or slightly basic pH. It has an ATP-dependent proteolytic activity. The polypeptide is Proteasome subunit alpha type-6 (PRE5) (Saccharomyces cerevisiae (strain ATCC 204508 / S288c) (Baker's yeast)).